Here is a 462-residue protein sequence, read N- to C-terminus: A-type ATP synthase subunit B (462 aa).

This sequence belongs to the ATPase alpha/beta chains family. In terms of assembly, has multiple subunits with at least A(3), B(3), C, D, E, F, H, I and proteolipid K(x).

Its subcellular location is the cell membrane. In terms of biological role, component of the A-type ATP synthase that produces ATP from ADP in the presence of a proton gradient across the membrane. The B chain is a regulatory subunit. This Pyrococcus abyssi (strain GE5 / Orsay) protein is A-type ATP synthase subunit B.